The sequence spans 301 residues: Protoheme IX farnesyltransferase (301 aa).

A run of 9 helical transmembrane segments spans residues 29-49, 51-71, 101-121, 123-143, 150-170, 177-197, 223-243, 244-264, and 281-301; these read VVAL…PGAV, LQPL…AAAF, AFSF…WWVN, LTAW…TAYL, NIVI…TAVT, ALLL…ALAI, CILL…LVGM, SGPV…YKAW, and FSIY…YLWG.

The protein belongs to the UbiA prenyltransferase family. Protoheme IX farnesyltransferase subfamily.

It is found in the cell inner membrane. It catalyses the reaction heme b + (2E,6E)-farnesyl diphosphate + H2O = Fe(II)-heme o + diphosphate. Its pathway is porphyrin-containing compound metabolism; heme O biosynthesis; heme O from protoheme: step 1/1. Functionally, converts heme B (protoheme IX) to heme O by substitution of the vinyl group on carbon 2 of heme B porphyrin ring with a hydroxyethyl farnesyl side group. This Shewanella denitrificans (strain OS217 / ATCC BAA-1090 / DSM 15013) protein is Protoheme IX farnesyltransferase.